A 162-amino-acid chain; its full sequence is Xylulose kinase (162 aa).

The interval 16 to 39 is disordered; that stretch reads GGHSATPRPATGPAGPAAHSGRHQ. A compositionally biased stretch (low complexity) spans 20–33; the sequence is ATPRPATGPAGPAA.

Belongs to the FGGY kinase family.

The enzyme catalyses D-xylulose + ATP = D-xylulose 5-phosphate + ADP + H(+). Functionally, catalyzes the phosphorylation of D-xylulose to D-xylulose 5-phosphate. The polypeptide is Xylulose kinase (Actinoplanes sp. (strain ATCC 31351 / 3876) (Ampullariella sp.)).